Reading from the N-terminus, the 309-residue chain is MSFKFNFQVDEDENDNGNNNEQNNEESKLDISEFDSSSKMDELPSKYIDLRNNLSSLLSNVETEIVTFSSNNKLKKLVKPFKGNQDNNNDNNVNSNDKNDNNNNNNNNNKDYEKLLDKTDLIPGVYEGGFKLWECSIDIINYLFEEKIDLSGKKVLEIGCGHGLPGIYCLLNGSIVTFQDYNEEVIYNLTQPNVLINGGDINRAKYISGDWKFVDQLLKNEKFDIILTSDTLYNVGSFKKLYNLISNHLESNGKCYLASKTYYFGVGGGIRKFEELLKILNRLSIKTVRDIKDGLSNVREVVEITNKIN.

2 disordered regions span residues 1 to 37 and 79 to 111; these read MSFKFNFQVDEDENDNGNNNEQNNEESKLDISEFDSS and KPFKGNQDNNNDNNVNSNDKNDNNNNNNNNNKD. Basic and acidic residues predominate over residues 25-37; it reads EESKLDISEFDSS. Over residues 84 to 109 the composition is skewed to low complexity; it reads NQDNNNDNNVNSNDKNDNNNNNNNNN. S-adenosyl-L-methionine contacts are provided by residues 132–136, G159, 179–181, 209–211, and S229; these read LWECS, QDY, and GDW.

The protein belongs to the methyltransferase superfamily. METTL18 family.

It localises to the cytoplasm. The protein resides in the cytosol. It is found in the nucleus. Its subcellular location is the nucleolus. The enzyme catalyses L-histidyl-[protein] + S-adenosyl-L-methionine = N(tele)-methyl-L-histidyl-[protein] + S-adenosyl-L-homocysteine + H(+). Its function is as follows. Protein-L-histidine N-tele-methyltransferase that probably monomethylates RPL3. Through the methylation of RPL3 may regulate the dynamics of pre-rRNA processing, ribosome biogenesis, and translation. This Dictyostelium discoideum (Social amoeba) protein is Histidine protein methyltransferase 1 homolog.